We begin with the raw amino-acid sequence, 469 residues long: Transcription factor phomD (469 aa).

Positions 14–41 (CNACNESKVRCSQRKPTCARCERNGVEC) form a DNA-binding region, zn(2)-C6 fungal-type. The interval 49–118 (THKDAPPISM…QQKEEAAAAA (70 aa)) is disordered. The span at 82–93 (KANSNSSSNWHM) shows a compositional bias: polar residues. Low complexity predominate over residues 104–118 (QQQQQQQKEEAAAAA).

Its subcellular location is the nucleus. Transcription factor; part of the gene cluster that mediates the biosynthesis of the phomopsins, a group of hexapeptide mycotoxins which infects lupins and causes lupinosis disease in livestock. May play a role in the regulation of the production of phomopsins. The sequence is that of Transcription factor phomD from Diaporthe leptostromiformis (Lupinosis disease fungus).